Here is a 437-residue protein sequence, read N- to C-terminus: GTPase Der (437 aa).

2 consecutive EngA-type G domains span residues Pro4–Ala167 and Ile175–Arg352. GTP is bound by residues Gly10–Ser17, Asp57–Ile61, Asn119–Asp122, Gly181–Ser188, Asp229–Ile233, and Asn294–Asp297. In terms of domain architecture, KH-like spans Gln353–Gln437.

It belongs to the TRAFAC class TrmE-Era-EngA-EngB-Septin-like GTPase superfamily. EngA (Der) GTPase family. As to quaternary structure, associates with the 50S ribosomal subunit.

GTPase that plays an essential role in the late steps of ribosome biogenesis. This chain is GTPase Der, found in Limosilactobacillus reuteri (strain DSM 20016) (Lactobacillus reuteri).